The sequence spans 86 residues: Photosystem I reaction center subunit PsaK 1 (86 aa).

Residues 1-8 (MLTSTLLA) constitute a propeptide that is removed on maturation. Transmembrane regions (helical) follow at residues 14 to 34 (LEWSPTVGIIMVIANVIAITF) and 60 to 80 (PALLATTAFGHILGVGLVLGL).

Belongs to the PsaG/PsaK family. As to quaternary structure, the cyanobacterial PSI reaction center is composed of one copy each of PsaA,B,C,D,E,F,I,J,K,L,M and X, and forms dimeric and tetrameric complexes.

The protein resides in the cellular thylakoid membrane. The chain is Photosystem I reaction center subunit PsaK 1 (psaK1) from Nostoc sp. (strain PCC 7120 / SAG 25.82 / UTEX 2576).